Here is a 560-residue protein sequence, read N- to C-terminus: Nucleoprotein (560 aa).

The tract at residues 54-236 (LRKAKRSDAD…ITRDESAVNI (183 aa)) is binding site for the cap structure m7GTP. The span at 323-332 (GRSWDNTSVD) shows a compositional bias: polar residues. Residues 323 to 349 (GRSWDNTSVDLNPKPDPGPRAPEKNGQ) are disordered. Residues D380 and E382 each coordinate Mn(2+). E390, C497, H500, and C521 together coordinate Zn(2+). A Mn(2+)-binding site is contributed by D525.

Belongs to the arenaviridae nucleocapsid protein family. In terms of assembly, homomultimerizes to form the nucleocapsid. Binds to viral genomic RNA. Interacts with glycoprotein G2. Interacts with protein Z; this interaction probably directs the encapsidated genome to budding sites. Interacts with protein L; this interaction does not interfere with Z-L interaction. Interacts with host IKBKE (via Protein kinase domain); the interaction inhibits IKBKE kinase activity.

It localises to the virion. The protein localises to the host cytoplasm. In terms of biological role, encapsidates the genome, protecting it from nucleases. The encapsidated genomic RNA is termed the nucleocapsid (NC). Serves as template for viral transcription and replication. The increased presence of protein N in host cell does not seem to trigger the switch from transcription to replication as observed in other negative strain RNA viruses. Through the interaction with host IKBKE, strongly inhibits the phosphorylation and nuclear translocation of host IRF3, a protein involved in interferon activation pathway, leading to the inhibition of interferon-beta and IRF3-dependent promoters activation. Also encodes a functional 3'-5' exoribonuclease that degrades preferentially dsRNA substrates and thereby participates in the suppression of interferon induction. This is Nucleoprotein from Cupixi mammarenavirus (isolate Rat/Brasil/BeAn 119303/1970) (CPXV).